The primary structure comprises 398 residues: MSIDLSLPELPILHPRITVVGVGGAGGNAVNNMIQSNLQGVNFVVANTDAQALEKSLCDKKIQLGINLTKGLGAGALPDVGKGAAEESIDEIMEHIKDSHMLFITAGMGGGTGTGAAPVIAKAAREARAAVKDRAPKEKKILTVGVVTKPFGFEGVRRMPIAELGLEELQKYVDTLIVIPNQNLFRIANEKTTFSDAFKLADNVLHIGIRGVTDLMVMPGLINLDFADIETVMSEMGKAMIGTGEAEGEDRAISAAEAAISNPLLDNVSMKGAQGILINITGGGDMTLFEVDAAANRVREEVDENANIIFGATFDQAMEGRVRVSVLATGIDGRNNKSETSPISQSEDSEKEKFKWPYSQSESTQDKTLETKPAEQVSEGAKWGSNIYDIPAYLRRKK.

Residues Gly-24–Asn-28, Gly-111–Gly-113, Glu-154, Arg-158, and Asp-202 each bind GTP. A disordered region spans residues Gly-333 to Ala-381. The segment covering Thr-364–Pro-373 has biased composition (basic and acidic residues).

It belongs to the FtsZ family. In terms of assembly, homodimer. Polymerizes to form a dynamic ring structure in a strictly GTP-dependent manner. Interacts directly with several other division proteins.

It localises to the cytoplasm. Essential cell division protein that forms a contractile ring structure (Z ring) at the future cell division site. The regulation of the ring assembly controls the timing and the location of cell division. One of the functions of the FtsZ ring is to recruit other cell division proteins to the septum to produce a new cell wall between the dividing cells. Binds GTP and shows GTPase activity. The polypeptide is Cell division protein FtsZ (Wolbachia sp).